A 793-amino-acid polypeptide reads, in one-letter code: METRTNEYSRKGAMWELERNLDQPMDAEAGRLRNMYREKTYPTILLLRLAFQSLGVVFGDLGTSPLYVFYNIFPHGIEDTEQVIGALSLIIYSLTLIPLVKYVFIVLRANDNGQGGTFALYSLLCRHAKINIIPNQHRTDQDLTTYSRRTYEEKSLAAKIQRWLEGHQFRKNLILILVLFGTCMAVGDGILTPAISVLSATGGIQVEEGRMRNDVVVIISVLILIGLFSMQHYGTDKVSWLFAPIVFVWFILIGILGAVNICKYDHSVLKAFNPVYVYRYFKRGKTSWTSLGGIMLSITGTEALFADLSYFPVQAIQIAFTVVVFPCLLLQYTGQAAFIAANTNQVSHAFYISLPAPILWPAFAVATAAAIVASQATISATYSIIKQALALGCFPRVKIIHTSKKYLGQIYSPDINWILMVFCIAVTAGFKNQSQIANAYGTAVIMVMLVTTFLMIPIMLLVWRSHWTLVVAFTVLSLLVEIPYFSAVVRKIDQGGWVPLVFAAGFMIIMYVWHYGTLKRYEFEMHSKVSMAWILGLGPSLGLVRVPGIGLVYTELASGVPHIFSHFITNLPAIHSTLVFVCVKYLPVYTVPPDERFLVKRIGPKNFHMFRCVARYGYKDIHKKDDDFEKMLFDSLILFVRLESMMEEYSDSDEYSTLMMSLPNNPGISNGGVTTTGTNNVMEVMSCTSTHDSIVPVNSRSDDTGSSQVMPASGQMAFQSVGDEIAFLNACRDAGVVHILGNTVIRARRDSGFVKKIVINYMYAFLRKICRENSAIFNVPHESMLNVGQVFYV.

Topologically, residues M1–S53 are cytoplasmic. A helical membrane pass occupies residues L54–P74. The Extracellular portion of the chain corresponds to H75–A86. The helical transmembrane segment at L87 to L107 threads the bilayer. The Cytoplasmic segment spans residues R108–N172. A helical membrane pass occupies residues L173–P193. Topologically, residues A194–D214 are extracellular. Residues V215–T235 traverse the membrane as a helical segment. Over D236–K237 the chain is Cytoplasmic. The helical transmembrane segment at V238–A258 threads the bilayer. Topologically, residues V259–S287 are extracellular. A helical membrane pass occupies residues W288 to L308. S309 is a topological domain (cytoplasmic). A helical transmembrane segment spans residues Y310–L330. The Extracellular portion of the chain corresponds to Q331–Y351. Residues I352–V372 traverse the membrane as a helical segment. The Cytoplasmic segment spans residues A373 to Q409. A helical transmembrane segment spans residues I410–F430. At K431–T442 the chain is on the extracellular side. An N-linked (GlcNAc...) asparagine glycan is attached at N432. Residues A443–W463 traverse the membrane as a helical segment. Topologically, residues R464–T468 are cytoplasmic. A helical transmembrane segment spans residues L469–V489. Residues R490–Q494 lie on the Extracellular side of the membrane. A helical membrane pass occupies residues G495–Y515. At G516–V793 the chain is on the cytoplasmic side.

It belongs to the HAK/KUP transporter (TC 2.A.72.3) family.

It localises to the membrane. Its function is as follows. High-affinity potassium transporter. The polypeptide is Potassium transporter 18 (HAK18) (Oryza sativa subsp. japonica (Rice)).